The chain runs to 807 residues: cAMP-regulated phosphoprotein 21 (807 aa).

Positions 1-127 (MSEQGGLTPT…KNREKLSERP (127 aa)) are disordered. The residue at position 2 (Ser-2) is an N-acetylserine. A Phosphoserine modification is found at Ser-32. Residues 32-57 (SLDEEEKLELQRRLAAQNQERRKSKS) adopt a coiled-coil conformation. Ser-55 bears the Phosphoserine; by PKA mark. Polar residues predominate over residues 89–98 (IHLQLSSFPS). The span at 101–127 (EEDKSRKDDSEREKEKDKNREKLSERP) shows a compositional bias: basic and acidic residues. The residue at position 133 (Ser-133) is a Phosphoserine. In terms of domain architecture, R3H spans 163-226 (RMILLKMEQE…SVIINKTSST (64 aa)). In terms of domain architecture, SUZ spans 227–298 (RIPEQRFCEH…VRERIFAHDS (72 aa)). The segment at 245–282 (SQKRFILKRDNSSIDKEDNQNRMHPFRDDRRSKSIEER) is disordered. A phosphoserine mark is found at Asn-265 and Ser-298. Disordered regions lie at residues 328–434 (LFRA…TSSV), 474–536 (GSIL…QPQM), 552–576 (SQLS…YPAS), and 595–627 (QLST…QQPP). The span at 337–348 (GRTSGSRQSSSE) shows a compositional bias: low complexity. Residues 349 to 358 (TELRWPDHQR) show a composition bias toward basic and acidic residues. Residues 359–380 (AWSSTDSDSSNRNLKPTMTKTA) show a composition bias toward polar residues. Ser-361 and Ser-381 each carry phosphoserine. The span at 401 to 421 (GKLSKTGSESSSSAGSSGSLS) shows a compositional bias: low complexity. Residues 422–434 (RTHPQSTALTSSV) show a composition bias toward polar residues. A compositionally biased stretch (pro residues) spans 514–524 (QQPPQQQPSPQ). The segment covering 525-535 (PQQQVQASQPQ) has biased composition (low complexity). 2 stretches are compositionally biased toward polar residues: residues 552 to 563 (SQLSMSRQSSGD) and 595 to 613 (QLST…QQVL). Ser-557 bears the Phosphoserine mark. Arg-650 is subject to Asymmetric dimethylarginine.

In terms of assembly, interacts with CALM1. Phosphorylation of isoform 2 at Ser-55 is enhanced upon dopamine D1 receptor activation and favors interaction with CALM1. In terms of processing, methylated by CARM1 at Arg-650 in immature thymocytes. In terms of tissue distribution, present at high levels in thymus and low levels in brain. In thymus, isoform 1 is specifically found in immature thymocytes (at protein level).

It localises to the cytoplasm. Its function is as follows. May act as a competitive inhibitor of calmodulin-dependent enzymes such as calcineurin in neurons. The protein is cAMP-regulated phosphoprotein 21 (Arpp21) of Mus musculus (Mouse).